Consider the following 732-residue polypeptide: Catalase-peroxidase (732 aa).

The interval M1–S21 is disordered. Positions M1–A22 are cleaved as a signal peptide. The segment at residues W97 to Y220 is a cross-link (tryptophyl-tyrosyl-methioninium (Trp-Tyr) (with M-246)). H98 functions as the Proton acceptor in the catalytic mechanism. Residues Y220 to M246 constitute a cross-link (tryptophyl-tyrosyl-methioninium (Tyr-Met) (with W-97)). Position 261 (H261) interacts with heme b.

It belongs to the peroxidase family. Peroxidase/catalase subfamily. As to quaternary structure, homodimer or homotetramer. The cofactor is heme b. In terms of processing, formation of the three residue Trp-Tyr-Met cross-link is important for the catalase, but not the peroxidase activity of the enzyme.

It carries out the reaction H2O2 + AH2 = A + 2 H2O. It catalyses the reaction 2 H2O2 = O2 + 2 H2O. Bifunctional enzyme with both catalase and broad-spectrum peroxidase activity. The chain is Catalase-peroxidase from Synechococcus sp. (strain RCC307).